Reading from the N-terminus, the 356-residue chain is Alanine racemase, catabolic (356 aa).

Catalysis depends on Lys-35, which acts as the Proton acceptor; specific for D-alanine. An N6-(pyridoxal phosphate)lysine modification is found at Lys-35. Arg-130 contacts substrate. Tyr-253 serves as the catalytic Proton acceptor; specific for L-alanine. Met-301 is a binding site for substrate.

This sequence belongs to the alanine racemase family. The cofactor is pyridoxal 5'-phosphate.

The enzyme catalyses L-alanine = D-alanine. In terms of biological role, isomerizes L-alanine to D-alanine which is then oxidized to pyruvate by DadA. The chain is Alanine racemase, catabolic (dadX) from Salmonella typhi.